The following is a 126-amino-acid chain: uncharacterized protein (126 aa).

The interval 1–27 is disordered; the sequence is MSKSKTPNFDDMEVLDDTNDEYDDSES. Acidic residues predominate over residues 10–27; it reads DDMEVLDDTNDEYDDSES.

This is an uncharacterized protein from Halorubrum sp. PV6 (HRPV-1).